A 441-amino-acid chain; its full sequence is 5-methylthioadenosine/S-adenosylhomocysteine deaminase (441 aa).

Histidine 70 and histidine 72 together coordinate Zn(2+). The substrate site is built by glutamate 99 and histidine 191. Histidine 218 is a binding site for Zn(2+). 2 residues coordinate substrate: glutamate 221 and aspartate 306. Aspartate 306 lines the Zn(2+) pocket.

It belongs to the metallo-dependent hydrolases superfamily. MTA/SAH deaminase family. Requires Zn(2+) as cofactor.

It catalyses the reaction S-adenosyl-L-homocysteine + H2O + H(+) = S-inosyl-L-homocysteine + NH4(+). The catalysed reaction is S-methyl-5'-thioadenosine + H2O + H(+) = S-methyl-5'-thioinosine + NH4(+). Catalyzes the deamination of 5-methylthioadenosine and S-adenosyl-L-homocysteine into 5-methylthioinosine and S-inosyl-L-homocysteine, respectively. Is also able to deaminate adenosine. This chain is 5-methylthioadenosine/S-adenosylhomocysteine deaminase, found in Lawsonia intracellularis (strain PHE/MN1-00).